A 237-amino-acid chain; its full sequence is Large ribosomal subunit protein bL25 (237 aa).

An N-terminal domain region spans residues 1 to 104 (MELTAKPRTP…SVPVHTTGRS (104 aa)). The tract at residues 105–189 (QGEVQGGLVD…ELEAEVQAAQ (85 aa)) is middle domain. The interval 190–237 (VAGLVAAGELSEEAAEAVLEGDASLEEVKAEASEDNAGTDSEDNSDAQ) is C-terminal domain. Positions 205–237 (EAVLEGDASLEEVKAEASEDNAGTDSEDNSDAQ) are disordered.

Belongs to the bacterial ribosomal protein bL25 family. CTC subfamily. As to quaternary structure, part of the 50S ribosomal subunit. Contacts proteins L11 and L16, the A site tRNA, and the 5S and 23S rRNAs.

Functionally, this is one of 3 proteins that mediate the attachment of the 5S rRNA onto the large ribosomal subunit. This protein has three domains. The N-terminal one is bound on the solvent face, the middle domain fills the space between the 5S rRNA and the L11 arm contacting the 23S rRNA while the C-terminal domain is on the edge of the intersubunit interface and contacts the A site. The protein conformation changes upon binding of a tRNA mimic to the A site, although the mimic does not interact directly with CTC itself, consistent with CTCs presumed role in moderating A site binding. This is Large ribosomal subunit protein bL25 (rplY) from Deinococcus radiodurans (strain ATCC 13939 / DSM 20539 / JCM 16871 / CCUG 27074 / LMG 4051 / NBRC 15346 / NCIMB 9279 / VKM B-1422 / R1).